Consider the following 372-residue polypeptide: Queuine tRNA-ribosyltransferase (372 aa).

Residue Asp-92 is the Proton acceptor of the active site. Substrate contacts are provided by residues 92–96, Asp-146, Gln-188, and Gly-215; that span reads DSGGF. Residues 246-252 are RNA binding; it reads GIGTLRE. The Nucleophile role is filled by Asp-265. The RNA binding; important for wobble base 34 recognition stretch occupies residues 270 to 274; it reads TRLGR. Zn(2+) contacts are provided by Cys-303, Cys-305, Cys-308, and His-334.

Belongs to the queuine tRNA-ribosyltransferase family. In terms of assembly, homodimer. Within each dimer, one monomer is responsible for RNA recognition and catalysis, while the other monomer binds to the replacement base PreQ1. Zn(2+) is required as a cofactor.

The catalysed reaction is 7-aminomethyl-7-carbaguanine + guanosine(34) in tRNA = 7-aminomethyl-7-carbaguanosine(34) in tRNA + guanine. The protein operates within tRNA modification; tRNA-queuosine biosynthesis. Catalyzes the base-exchange of a guanine (G) residue with the queuine precursor 7-aminomethyl-7-deazaguanine (PreQ1) at position 34 (anticodon wobble position) in tRNAs with GU(N) anticodons (tRNA-Asp, -Asn, -His and -Tyr). Catalysis occurs through a double-displacement mechanism. The nucleophile active site attacks the C1' of nucleotide 34 to detach the guanine base from the RNA, forming a covalent enzyme-RNA intermediate. The proton acceptor active site deprotonates the incoming PreQ1, allowing a nucleophilic attack on the C1' of the ribose to form the product. After dissociation, two additional enzymatic reactions on the tRNA convert PreQ1 to queuine (Q), resulting in the hypermodified nucleoside queuosine (7-(((4,5-cis-dihydroxy-2-cyclopenten-1-yl)amino)methyl)-7-deazaguanosine). The sequence is that of Queuine tRNA-ribosyltransferase from Prochlorococcus marinus (strain MIT 9313).